A 798-amino-acid polypeptide reads, in one-letter code: Protocadherin beta-13 (798 aa).

Residues 1–28 (MEASGKLICRQRQVLFSFLLLGLSLAGA) form the signal peptide. Residues 29 to 690 (AEPRSYSVVE…AQADSLTVYL (662 aa)) are Extracellular-facing. 5 Cadherin domains span residues 36–134 (VVEE…SPVF), 139–243 (MLVK…APEF), 248–348 (YRVQ…APEV), 353–451 (FTSP…APAF), and 456–561 (YTLF…SPFV). N-linked (GlcNAc...) asparagine glycosylation is found at Asn418 and Asn436. Asn567 carries an N-linked (GlcNAc...) asparagine glycan. The Cadherin 6 domain maps to 568 to 671 (GSAPCTELVP…LVDGFSQPYL (104 aa)). The chain crosses the membrane as a helical span at residues 691–711 (VVALASVSSLFLFSVLLFVAV). At 712 to 798 (RLCRRSRAAS…FPNNFGFNIQ (87 aa)) the chain is on the cytoplasmic side.

The protein localises to the cell membrane. Its function is as follows. Potential calcium-dependent cell-adhesion protein. May be involved in the establishment and maintenance of specific neuronal connections in the brain. This Pan troglodytes (Chimpanzee) protein is Protocadherin beta-13 (PCDHB13).